Here is a 237-residue protein sequence, read N- to C-terminus: UPF0173 metal-dependent hydrolase BCAN_B0597 (237 aa).

The protein belongs to the UPF0173 family.

This chain is UPF0173 metal-dependent hydrolase BCAN_B0597, found in Brucella canis (strain ATCC 23365 / NCTC 10854 / RM-666).